Here is a 175-residue protein sequence, read N- to C-terminus: CASP-like protein 2C1 (175 aa).

Residues 1 to 7 (MVRLRET) are Cytoplasmic-facing. Residues 8 to 28 (EVILRLCIVFFILLSSCLIGL) form a helical membrane-spanning segment. Over 29–51 (DSQTKEIAYIHKKVSFRYLLALE) the chain is Extracellular. Residues 52 to 72 (AELYINVVVAAYNLVQIGLGW) form a helical membrane-spanning segment. Residues 73–91 (YNVEQKTSNPKWFSYLLDQ) lie on the Cytoplasmic side of the membrane. Residues 92 to 112 (TAAYVVFAGTSAAAQHSLLVV) traverse the membrane as a helical segment. Residues 113–136 (TGSRELQWMKWCYKFTRFCFQMGS) lie on the Extracellular side of the membrane. The chain crosses the membrane as a helical span at residues 137–157 (AIILNYIAAALMVLLSSISAF). Residues 158-175 (NLFRLYSPKRFFSFKSSS) are Cytoplasmic-facing.

It belongs to the Casparian strip membrane proteins (CASP) family. Homodimer and heterodimers.

It localises to the cell membrane. This Arabidopsis lyrata subsp. lyrata (Lyre-leaved rock-cress) protein is CASP-like protein 2C1.